A 622-amino-acid polypeptide reads, in one-letter code: 1-deoxy-D-xylulose-5-phosphate synthase (622 aa).

Residues His74 and 115–117 (GHS) each bind thiamine diphosphate. A Mg(2+)-binding site is contributed by Asp146. Thiamine diphosphate-binding positions include 147–148 (GA), Asn177, Phe285, and Glu366. Asn177 is a Mg(2+) binding site.

It belongs to the transketolase family. DXPS subfamily. Homodimer. Mg(2+) serves as cofactor. It depends on thiamine diphosphate as a cofactor.

The catalysed reaction is D-glyceraldehyde 3-phosphate + pyruvate + H(+) = 1-deoxy-D-xylulose 5-phosphate + CO2. Its pathway is metabolic intermediate biosynthesis; 1-deoxy-D-xylulose 5-phosphate biosynthesis; 1-deoxy-D-xylulose 5-phosphate from D-glyceraldehyde 3-phosphate and pyruvate: step 1/1. Functionally, catalyzes the acyloin condensation reaction between C atoms 2 and 3 of pyruvate and glyceraldehyde 3-phosphate to yield 1-deoxy-D-xylulose-5-phosphate (DXP). The sequence is that of 1-deoxy-D-xylulose-5-phosphate synthase from Magnetococcus marinus (strain ATCC BAA-1437 / JCM 17883 / MC-1).